The primary structure comprises 143 residues: Deoxyuridine 5'-triphosphate nucleotidohydrolase (143 aa).

It belongs to the dUTPase family. Mg(2+) is required as a cofactor.

The catalysed reaction is dUTP + H2O = dUMP + diphosphate + H(+). Its function is as follows. This enzyme is involved in nucleotide metabolism: it produces dUMP, the immediate precursor of thymidine nucleotides and it decreases the intracellular concentration of dUTP so that uracil cannot be incorporated into DNA. The sequence is that of Deoxyuridine 5'-triphosphate nucleotidohydrolase (DUT) from Yaba monkey tumor virus (strain VR587) (YMTV).